The following is a 443-amino-acid chain: Regulator of rDNA transcription protein 5 (443 aa).

One can recognise an RRM 1 domain in the interval 4-87 (SRIYIANVSY…RVLRVRTHNP (84 aa)). The disordered stretch occupies residues 112 to 140 (EDTAASGERAPTDAQDHPDQPQEGHMSPD). A compositionally biased stretch (basic and acidic residues) spans 121 to 133 (APTDAQDHPDQPQ). In terms of domain architecture, RRM 2 spans 183-268 (DTVYCAFLPK…TKISIKPAYI (86 aa)). The interval 408-443 (GMTKQSVGSNKKKNKKKKSARGKEVRKLSVSNTTTQ) is disordered. Over residues 417-427 (NKKKNKKKKSA) the composition is skewed to basic residues.

The protein belongs to the RRT5 family.

Its function is as follows. May be involved in the modulation of rDNA transcription. This Candida glabrata (strain ATCC 2001 / BCRC 20586 / JCM 3761 / NBRC 0622 / NRRL Y-65 / CBS 138) (Yeast) protein is Regulator of rDNA transcription protein 5 (RRT5).